We begin with the raw amino-acid sequence, 189 residues long: Hypoxanthine/guanine phosphoribosyltransferase (189 aa).

The protein belongs to the purine/pyrimidine phosphoribosyltransferase family. Archaeal HPRT subfamily. Homodimer.

It localises to the cytoplasm. The enzyme catalyses IMP + diphosphate = hypoxanthine + 5-phospho-alpha-D-ribose 1-diphosphate. It carries out the reaction GMP + diphosphate = guanine + 5-phospho-alpha-D-ribose 1-diphosphate. Its pathway is purine metabolism; IMP biosynthesis via salvage pathway; IMP from hypoxanthine: step 1/1. In terms of biological role, catalyzes a salvage reaction resulting in the formation of IMP that is energically less costly than de novo synthesis. The protein is Hypoxanthine/guanine phosphoribosyltransferase of Methanothermus fervidus (strain ATCC 43054 / DSM 2088 / JCM 10308 / V24 S).